We begin with the raw amino-acid sequence, 333 residues long: Ornithine carbamoyltransferase (333 aa).

Carbamoyl phosphate contacts are provided by residues 56–59 (STRT), Arg-107, and 134–137 (HPTQ). Residues Asn-167, Asp-231, and 235 to 236 (SM) contribute to the L-ornithine site. Residues 273–274 (CL) and Arg-318 each bind carbamoyl phosphate.

Belongs to the aspartate/ornithine carbamoyltransferase superfamily. OTCase family.

The protein localises to the cytoplasm. It carries out the reaction carbamoyl phosphate + L-ornithine = L-citrulline + phosphate + H(+). It participates in amino-acid degradation; L-arginine degradation via ADI pathway; carbamoyl phosphate from L-arginine: step 2/2. Reversibly catalyzes the transfer of the carbamoyl group from carbamoyl phosphate (CP) to the N(epsilon) atom of ornithine (ORN) to produce L-citrulline. This Clostridium botulinum (strain ATCC 19397 / Type A) protein is Ornithine carbamoyltransferase.